A 604-amino-acid polypeptide reads, in one-letter code: Glutamine--fructose-6-phosphate aminotransferase [isomerizing] (604 aa).

Residue Cys-2 is the Nucleophile; for GATase activity of the active site. One can recognise a Glutamine amidotransferase type-2 domain in the interval 2 to 218; that stretch reads CGIVGVVGNR…DKELVILTKD (217 aa). SIS domains follow at residues 284 to 423 and 452 to 594; these read IITS…ANGK and VAEK…VDKP. Lys-599 acts as the For Fru-6P isomerization activity in catalysis.

As to quaternary structure, homodimer.

The protein resides in the cytoplasm. It catalyses the reaction D-fructose 6-phosphate + L-glutamine = D-glucosamine 6-phosphate + L-glutamate. Functionally, catalyzes the first step in hexosamine metabolism, converting fructose-6P into glucosamine-6P using glutamine as a nitrogen source. The sequence is that of Glutamine--fructose-6-phosphate aminotransferase [isomerizing] from Streptococcus pyogenes serotype M3 (strain ATCC BAA-595 / MGAS315).